Consider the following 610-residue polypeptide: tRNA uridine 5-carboxymethylaminomethyl modification enzyme MnmG (610 aa).

Residue 14–19 participates in FAD binding; it reads GAGHAG. 274–288 contacts NAD(+); sequence GPRYCPSIEDKIVKF.

This sequence belongs to the MnmG family. Homodimer. Heterotetramer of two MnmE and two MnmG subunits. FAD is required as a cofactor.

It localises to the cytoplasm. In terms of biological role, NAD-binding protein involved in the addition of a carboxymethylaminomethyl (cmnm) group at the wobble position (U34) of certain tRNAs, forming tRNA-cmnm(5)s(2)U34. The protein is tRNA uridine 5-carboxymethylaminomethyl modification enzyme MnmG of Chlamydia muridarum (strain MoPn / Nigg).